Reading from the N-terminus, the 615-residue chain is 1-deoxy-D-xylulose-5-phosphate synthase (615 aa).

Residues histidine 76 and 117-119 (GHS) each bind thiamine diphosphate. A Mg(2+)-binding site is contributed by aspartate 148. Thiamine diphosphate is bound by residues 149–150 (GA), asparagine 177, tyrosine 284, and glutamate 365. Mg(2+) is bound at residue asparagine 177.

The protein belongs to the transketolase family. DXPS subfamily. As to quaternary structure, homodimer. Mg(2+) serves as cofactor. Thiamine diphosphate is required as a cofactor.

The catalysed reaction is D-glyceraldehyde 3-phosphate + pyruvate + H(+) = 1-deoxy-D-xylulose 5-phosphate + CO2. The protein operates within metabolic intermediate biosynthesis; 1-deoxy-D-xylulose 5-phosphate biosynthesis; 1-deoxy-D-xylulose 5-phosphate from D-glyceraldehyde 3-phosphate and pyruvate: step 1/1. Functionally, catalyzes the acyloin condensation reaction between C atoms 2 and 3 of pyruvate and glyceraldehyde 3-phosphate to yield 1-deoxy-D-xylulose-5-phosphate (DXP). This Francisella tularensis subsp. novicida (strain U112) protein is 1-deoxy-D-xylulose-5-phosphate synthase.